Here is a 4730-residue protein sequence, read N- to C-terminus: Dynein heavy chain, cytoplasmic (4730 aa).

Disordered stretches follow at residues 1–23 (MEDQ…VVTP) and 91–120 (TINS…QQQS). Positions 1-1935 (MEDQQINVDS…VIHMANATFY (1935 aa)) are stem. Positions 10 to 23 (SPTSGTNTPPVVTP) are enriched in low complexity. Residues 867–900 (VRKLSTSINNFRDKVDDLIVKYSEIKKQLDGLKS) adopt a coiled-coil conformation. The disordered stretch occupies residues 964–1016 (EDQKDSQSTSGSSNKGGKLNRMNYSIRNKSDEENSSDLTQPQQSQQQQQTISI). Positions 969–978 (SQSTSGSSNK) are enriched in polar residues. Residues 1002-1016 (TQPQQSQQQQQTISI) are compositionally biased toward low complexity. Coiled-coil stretches lie at residues 1204-1224 (EKMN…EKLS), 1343-1372 (ALET…QALD), 1425-1441 (RKVR…LKNL), and 1661-1689 (AIER…YLER). AAA regions lie at residues 1936 to 2158 (YGFE…VLVS), 2238 to 2531 (KKIQ…FTRL), 2635 to 2885 (EVET…WDRA), and 2978 to 3252 (VFYE…QGRQ). 1974–1981 (GPAGTGKT) provides a ligand contact to ATP. A coiled-coil region spans residues 2231–2253 (IQMDQLRKKIQEIAKQRHLVTKQ). Position 2276–2283 (2276–2283 (GPSGGGKT)) interacts with ATP. The segment at 2437–2486 (EPFDPQEKEQQKRNENAQLQQQQQTTITSPILTSPPTTSSSSRSTTSTTS) is disordered. The segment covering 2441–2451 (PQEKEQQKRNE) has biased composition (basic and acidic residues). Positions 2442–2462 (QEKEQQKRNENAQLQQQQQTT) form a coiled coil. A compositionally biased stretch (low complexity) spans 2454–2486 (QLQQQQQTTITSPILTSPPTTSSSSRSTTSTTS). ATP contacts are provided by residues 2674–2681 (GPPGSGKT) and 3016–3023 (GVSGGGKS). Coiled coils occupy residues 3271-3349 (INEK…VQLD), 3483-3585 (AQTY…NTQM), and 3854-3881 (TLET…EISE). The tract at residues 3271–3585 (INEKRDQLEE…QQSENFNTQM (315 aa)) is stalk. AAA regions lie at residues 3638 to 3867 (LSKP…EIAL) and 4098 to 4312 (SHSF…SIDY). The segment at 4432–4465 (KMQSSEEDGEDDQVSGSSKKESSSSSSEDKGKAK) is disordered. Basic and acidic residues predominate over residues 4449–4463 (SKKESSSSSSEDKGK).

Belongs to the dynein heavy chain family. In terms of assembly, consists of at least two heavy chains and a number of intermediate and light chains.

It localises to the cytoplasm. The protein resides in the cytoskeleton. Cytoplasmic dynein acts as a motor for the intracellular retrograde motility of vesicles and organelles along microtubules. Dynein has ATPase activity; the force-producing power stroke is thought to occur on release of ADP. This Dictyostelium discoideum (Social amoeba) protein is Dynein heavy chain, cytoplasmic (dhcA).